Consider the following 231-residue polypeptide: Ribosyldihydronicotinamide dehydrogenase [quinone] (231 aa).

FAD contacts are provided by residues His-12 and 18–21; that span reads FNGS. Phosphoserine is present on Ser-80. An FAD-binding site is contributed by 104–107; the sequence is LYWF. 127–129 provides a ligand contact to substrate; sequence FDI. FAD is bound by residues 148 to 151 and Tyr-156; that span reads TTGG. Residues His-174 and His-178 each contribute to the Zn(2+) site. Residue Glu-194 participates in FAD binding. Ser-197 carries the post-translational modification Phosphoserine. Position 201 (Arg-201) interacts with FAD. Cys-223 lines the Zn(2+) pocket.

The protein belongs to the NAD(P)H dehydrogenase (quinone) family. In terms of assembly, homodimer. Zn(2+) serves as cofactor. Requires FAD as cofactor.

The protein localises to the cytoplasm. It carries out the reaction 1-(beta-D-ribofuranosyl)-1,4-dihydronicotinamide + a quinone + H(+) = beta-nicotinamide D-riboside + a quinol. In terms of biological role, the enzyme apparently serves as a quinone reductase in connection with conjugation reactions of hydroquinones involved in detoxification pathways as well as in biosynthetic processes such as the vitamin K-dependent gamma-carboxylation of glutamate residues in prothrombin synthesis. The polypeptide is Ribosyldihydronicotinamide dehydrogenase [quinone] (NQO2) (Pongo abelii (Sumatran orangutan)).